Reading from the N-terminus, the 185-residue chain is Elongation factor P 1 (185 aa).

Belongs to the elongation factor P family.

The protein localises to the cytoplasm. It participates in protein biosynthesis; polypeptide chain elongation. Involved in peptide bond synthesis. Stimulates efficient translation and peptide-bond synthesis on native or reconstituted 70S ribosomes in vitro. Probably functions indirectly by altering the affinity of the ribosome for aminoacyl-tRNA, thus increasing their reactivity as acceptors for peptidyl transferase. The protein is Elongation factor P 1 (efp1) of Chlamydia trachomatis serovar D (strain ATCC VR-885 / DSM 19411 / UW-3/Cx).